The chain runs to 341 residues: Ketol-acid reductoisomerase (NADP(+)) (341 aa).

The KARI N-terminal Rossmann domain maps to 2–182 (TDIVYDKDAD…GGLRAGGIRT (181 aa)). Residues 25 to 28 (YGSQ), Lys-48, Ser-51, Ser-53, and 83 to 86 (DQHQ) contribute to the NADP(+) site. His-108 is a catalytic residue. Gly-134 lines the NADP(+) pocket. Residues 183–328 (TFTEETETDL…RELRKLFAWN (146 aa)) enclose the KARI C-terminal knotted domain. Mg(2+) contacts are provided by Asp-191, Glu-195, Glu-227, and Glu-231. Residue Ser-252 coordinates substrate.

This sequence belongs to the ketol-acid reductoisomerase family. It depends on Mg(2+) as a cofactor.

The enzyme catalyses (2R)-2,3-dihydroxy-3-methylbutanoate + NADP(+) = (2S)-2-acetolactate + NADPH + H(+). It catalyses the reaction (2R,3R)-2,3-dihydroxy-3-methylpentanoate + NADP(+) = (S)-2-ethyl-2-hydroxy-3-oxobutanoate + NADPH + H(+). Its pathway is amino-acid biosynthesis; L-isoleucine biosynthesis; L-isoleucine from 2-oxobutanoate: step 2/4. It functions in the pathway amino-acid biosynthesis; L-valine biosynthesis; L-valine from pyruvate: step 2/4. Functionally, involved in the biosynthesis of branched-chain amino acids (BCAA). Catalyzes an alkyl-migration followed by a ketol-acid reduction of (S)-2-acetolactate (S2AL) to yield (R)-2,3-dihydroxy-isovalerate. In the isomerase reaction, S2AL is rearranged via a Mg-dependent methyl migration to produce 3-hydroxy-3-methyl-2-ketobutyrate (HMKB). In the reductase reaction, this 2-ketoacid undergoes a metal-dependent reduction by NADPH to yield (R)-2,3-dihydroxy-isovalerate. The sequence is that of Ketol-acid reductoisomerase (NADP(+)) from Clavibacter sepedonicus (Clavibacter michiganensis subsp. sepedonicus).